An 88-amino-acid polypeptide reads, in one-letter code: MANTVSAKKMTRKIAKRTAINRSRRSRMRTFVRKVEEAIASGDQGQALTALRAAEPEIMRAAQNGIVHKNNASRKVSRLAARVKAIAA.

This sequence belongs to the bacterial ribosomal protein bS20 family.

Functionally, binds directly to 16S ribosomal RNA. The polypeptide is Small ribosomal subunit protein bS20 (Methylorubrum extorquens (strain CM4 / NCIMB 13688) (Methylobacterium extorquens)).